Reading from the N-terminus, the 70-residue chain is Small ribosomal subunit protein bS21 (70 aa).

This sequence belongs to the bacterial ribosomal protein bS21 family.

The sequence is that of Small ribosomal subunit protein bS21 from Campylobacter curvus (strain 525.92).